Here is a 229-residue protein sequence, read N- to C-terminus: uncharacterized protein (229 aa).

The first 26 residues, Met-1–Ala-26, serve as a signal peptide directing secretion.

The protein belongs to the OmpW/AlkL family.

Its subcellular location is the cell outer membrane. This is an uncharacterized protein from Sinorhizobium fredii (strain NBRC 101917 / NGR234).